Here is a 154-residue protein sequence, read N- to C-terminus: Phosphopantetheine adenylyltransferase (154 aa).

This sequence belongs to the eukaryotic CoaD family.

The protein resides in the cytoplasm. It catalyses the reaction (R)-4'-phosphopantetheine + ATP + H(+) = 3'-dephospho-CoA + diphosphate. The protein operates within cofactor biosynthesis; coenzyme A biosynthesis. Its function is as follows. Reversibly transfers an adenylyl group from ATP to 4'-phosphopantetheine, yielding dephospho-CoA (dPCoA) and pyrophosphate. The chain is Phosphopantetheine adenylyltransferase from Methanosarcina mazei (strain ATCC BAA-159 / DSM 3647 / Goe1 / Go1 / JCM 11833 / OCM 88) (Methanosarcina frisia).